Reading from the N-terminus, the 311-residue chain is Short chain dehydrogenase opdN (311 aa).

L48, K73, E96, N123, Y217, and K221 together coordinate NADP(+). The active-site Proton donor is the Y217. The active-site Lowers pKa of active site Tyr is the K221.

Belongs to the short-chain dehydrogenases/reductases (SDR) family.

It functions in the pathway secondary metabolite biosynthesis. Functionally, short chain dehydrogenase; part of the gene cluster that mediates the biosynthesis of oxopyrrolidines, polyketide-amino acid hybrid compounds with feature structures of tetramic acid. Does not seem to play a role in oxopyrrolidines A and B biosynthesis. May be involved in further modifications of these oxopyrrolidines. The polypeptide is Short chain dehydrogenase opdN (Penicillium oxalicum (strain 114-2 / CGMCC 5302) (Penicillium decumbens)).